The sequence spans 48 residues: ATP synthase protein 8 (48 aa).

Residues Gly16–Leu36 form a helical membrane-spanning segment.

It belongs to the ATPase protein 8 family. F-type ATPases have 2 components, CF(1) - the catalytic core - and CF(0) - the membrane proton channel.

Its subcellular location is the mitochondrion membrane. In terms of biological role, mitochondrial membrane ATP synthase (F(1)F(0) ATP synthase or Complex V) produces ATP from ADP in the presence of a proton gradient across the membrane which is generated by electron transport complexes of the respiratory chain. F-type ATPases consist of two structural domains, F(1) - containing the extramembraneous catalytic core and F(0) - containing the membrane proton channel, linked together by a central stalk and a peripheral stalk. During catalysis, ATP synthesis in the catalytic domain of F(1) is coupled via a rotary mechanism of the central stalk subunits to proton translocation. Part of the complex F(0) domain. Minor subunit located with subunit a in the membrane. The sequence is that of ATP synthase protein 8 (ATP8) from Vanderwaltozyma polyspora (strain ATCC 22028 / DSM 70294 / BCRC 21397 / CBS 2163 / NBRC 10782 / NRRL Y-8283 / UCD 57-17) (Kluyveromyces polysporus).